The following is a 545-amino-acid chain: Glucose-6-phosphate isomerase (545 aa).

Glu351 functions as the Proton donor in the catalytic mechanism. Residues His382 and Lys510 contribute to the active site.

The protein belongs to the GPI family.

It is found in the cytoplasm. The enzyme catalyses alpha-D-glucose 6-phosphate = beta-D-fructose 6-phosphate. Its pathway is carbohydrate biosynthesis; gluconeogenesis. It functions in the pathway carbohydrate degradation; glycolysis; D-glyceraldehyde 3-phosphate and glycerone phosphate from D-glucose: step 2/4. Catalyzes the reversible isomerization of glucose-6-phosphate to fructose-6-phosphate. The chain is Glucose-6-phosphate isomerase from Shewanella frigidimarina (strain NCIMB 400).